Reading from the N-terminus, the 350-residue chain is Biotin synthase (350 aa).

In terms of domain architecture, Radical SAM core spans 54–278; it reads REIQLSTLLS…TMPQSYVRLS (225 aa). [4Fe-4S] cluster is bound by residues cysteine 69, cysteine 73, and cysteine 76. The [2Fe-2S] cluster site is built by cysteine 113, cysteine 144, cysteine 204, and arginine 276.

Belongs to the radical SAM superfamily. Biotin synthase family. In terms of assembly, homodimer. [4Fe-4S] cluster serves as cofactor. Requires [2Fe-2S] cluster as cofactor.

The enzyme catalyses (4R,5S)-dethiobiotin + (sulfur carrier)-SH + 2 reduced [2Fe-2S]-[ferredoxin] + 2 S-adenosyl-L-methionine = (sulfur carrier)-H + biotin + 2 5'-deoxyadenosine + 2 L-methionine + 2 oxidized [2Fe-2S]-[ferredoxin]. The protein operates within cofactor biosynthesis; biotin biosynthesis; biotin from 7,8-diaminononanoate: step 2/2. Catalyzes the conversion of dethiobiotin (DTB) to biotin by the insertion of a sulfur atom into dethiobiotin via a radical-based mechanism. The sequence is that of Biotin synthase from Neisseria meningitidis serogroup B (strain ATCC BAA-335 / MC58).